A 73-amino-acid chain; its full sequence is Translation initiation factor IF-1 (73 aa).

Positions 1–73 (MAKKEDTIVL…TKARVVYRHR (73 aa)) constitute an S1-like domain.

This sequence belongs to the IF-1 family. As to quaternary structure, component of the 30S ribosomal translation pre-initiation complex which assembles on the 30S ribosome in the order IF-2 and IF-3, IF-1 and N-formylmethionyl-tRNA(fMet); mRNA recruitment can occur at any time during PIC assembly.

It localises to the cytoplasm. Functionally, one of the essential components for the initiation of protein synthesis. Stabilizes the binding of IF-2 and IF-3 on the 30S subunit to which N-formylmethionyl-tRNA(fMet) subsequently binds. Helps modulate mRNA selection, yielding the 30S pre-initiation complex (PIC). Upon addition of the 50S ribosomal subunit IF-1, IF-2 and IF-3 are released leaving the mature 70S translation initiation complex. In Chlamydia abortus (strain DSM 27085 / S26/3) (Chlamydophila abortus), this protein is Translation initiation factor IF-1.